The following is a 686-amino-acid chain: Putative cuticle collagen 99 (686 aa).

2 disordered regions span residues P42 to P79 and G163 to A444. Over residues P67–P79 the composition is skewed to pro residues. Triple-helical region regions lie at residues G142–R201, G230–G263, and G268–D296. Residues P231–P243 show a composition bias toward pro residues. A compositionally biased stretch (basic and acidic residues) spans R246–R256. Residues G306–Q318 show a composition bias toward low complexity. Composition is skewed to basic and acidic residues over residues E361–D373 and R401–R417. A triple-helical region region spans residues G394 to G439. N-linked (GlcNAc...) asparagine glycans are attached at residues N446 and N535. The interval K475–Y650 is disordered. Triple-helical region stretches follow at residues P479–Q536, G538–M576, and G577–D636. The segment covering R540–P549 has biased composition (pro residues). The segment covering Q563–P581 has biased composition (low complexity).

Belongs to the cuticular collagen family. Collagen polypeptide chains are complexed within the cuticle by disulfide bonds and other types of covalent cross-links.

Functionally, nematode cuticles are composed largely of collagen-like proteins. The cuticle functions both as an exoskeleton and as a barrier to protect the worm from its environment. In Caenorhabditis briggsae, this protein is Putative cuticle collagen 99.